A 286-amino-acid chain; its full sequence is Probable glucose uptake protein GlcU (286 aa).

10 helical membrane-spanning segments follow: residues 4–22, 27–49, 53–72, 85–107, 111–133, 154–176, 181–198, 211–228, 233–255, and 267–284; these read IFLA…LFNV, GPYS…VYIF, VLTP…WALG, VSRT…GVIV, WSTT…GVIL, IVIL…LFNV, ALLP…LLTF, IIPG…FISQ, VATS…ILIL, and IVVG…LGIA.

This sequence belongs to the GRP transporter (TC 2.A.7.5) family.

The protein resides in the cell membrane. Functionally, involved in the uptake of glucose. The protein is Probable glucose uptake protein GlcU (glcU) of Bacillus cereus (strain ATCC 14579 / DSM 31 / CCUG 7414 / JCM 2152 / NBRC 15305 / NCIMB 9373 / NCTC 2599 / NRRL B-3711).